An 89-amino-acid polypeptide reads, in one-letter code: Small ribosomal subunit protein uS14 (89 aa).

This sequence belongs to the universal ribosomal protein uS14 family. In terms of assembly, part of the 30S ribosomal subunit. Contacts proteins S3 and S10.

Its function is as follows. Binds 16S rRNA, required for the assembly of 30S particles and may also be responsible for determining the conformation of the 16S rRNA at the A site. This chain is Small ribosomal subunit protein uS14, found in Chlorobium chlorochromatii (strain CaD3).